The chain runs to 476 residues: Glutamate--tRNA ligase (476 aa).

The 'HIGH' region motif lies at 9 to 19 (PSPTGTLHIGT). The 'KMSKS' region signature appears at 248–252 (KLSKR). Lys251 is an ATP binding site.

Belongs to the class-I aminoacyl-tRNA synthetase family. Glutamate--tRNA ligase type 1 subfamily. In terms of assembly, monomer.

It localises to the cytoplasm. It catalyses the reaction tRNA(Glu) + L-glutamate + ATP = L-glutamyl-tRNA(Glu) + AMP + diphosphate. Catalyzes the attachment of glutamate to tRNA(Glu) in a two-step reaction: glutamate is first activated by ATP to form Glu-AMP and then transferred to the acceptor end of tRNA(Glu). The polypeptide is Glutamate--tRNA ligase (Synechococcus sp. (strain CC9311)).